A 109-amino-acid polypeptide reads, in one-letter code: Large ribosomal subunit protein uL23 (109 aa).

This sequence belongs to the universal ribosomal protein uL23 family. Part of the 50S ribosomal subunit. Contacts protein L29, and trigger factor when it is bound to the ribosome.

Its function is as follows. One of the early assembly proteins it binds 23S rRNA. One of the proteins that surrounds the polypeptide exit tunnel on the outside of the ribosome. Forms the main docking site for trigger factor binding to the ribosome. The chain is Large ribosomal subunit protein uL23 from Haemophilus influenzae (strain PittEE).